The chain runs to 522 residues: Sorting nexin-1 (522 aa).

2 disordered regions span residues 1 to 84 (MASG…QDQE) and 115 to 142 (SLPP…QEDQ). A phosphoserine mark is found at Ser-32 and Ser-39. Positions 35 to 45 (EAGDSDTEGED) are enriched in acidic residues. 2 positions are modified to phosphothreonine: Thr-41 and Thr-48. Residues 55-73 (KHQSPKITTSLLPINNGSK) show a composition bias toward polar residues. A phosphoserine mark is found at Ser-58 and Ser-72. A compositionally biased stretch (acidic residues) spans 132–142 (EELEEEEQEDQ). One can recognise a PX domain in the interval 143–272 (FDLTVGITDP…EFLEKEELPR (130 aa)). A 1,2-diacyl-sn-glycero-3-phospho-(1D-myo-inositol-3-phosphate)-binding residues include Arg-186, Ser-188, and Lys-214. Ser-188 carries the post-translational modification Phosphoserine. Lys-237 is subject to N6-acetyllysine. Arg-238 lines the a 1,2-diacyl-sn-glycero-3-phospho-(1D-myo-inositol-3-phosphate) pocket. Ser-280 carries the phosphoserine modification. Residues 281–298 (GAGLLKMFNKATDAVSKM) are membrane-binding amphipathic helix. The region spanning 302 to 522 (MNESDIWFEE…AFLPEAKAIS (221 aa)) is the BAR domain.

This sequence belongs to the sorting nexin family. As to quaternary structure, predominantly forms heterodimers with BAR domain-containing sorting nexins SNX5, SNX6 and SNX32; can self-associate to form homodimers. The heterodimers are proposed to self-assemble into helical arrays on the membrane to stabilize and expand local membrane curvature underlying endosomal tubule formation. Thought to be a component of the originally described retromer complex (also called SNX-BAR retromer) which is a pentamer containing the heterotrimeric retromer cargo-selective complex (CSC), also described as vacuolar protein sorting subcomplex (VPS) and a heterodimeric membrane-deforming subcomplex formed between SNX1 or SNX2 and SNX5 or SNX6 (also called SNX-BAR subcomplex); the respective CSC and SNX-BAR subcomplexes associate with low affinity. Interacts with SNX5, SNX6, SNX32, VPS26A, VPS29, VPS35, DRD5, DENND5A, KALRN, RHOG (GDP-bound form). The interaction with SNX2 is reported controversially. Interacts with DNAJC13; prevented by presence of HGS. Interacts with HGS.

It is found in the endosome membrane. It localises to the golgi apparatus. The protein localises to the trans-Golgi network membrane. Its subcellular location is the early endosome membrane. The protein resides in the cell projection. It is found in the lamellipodium. Involved in several stages of intracellular trafficking. Interacts with membranes containing phosphatidylinositol 3-phosphate (PtdIns(3P)) or phosphatidylinositol 3,5-bisphosphate (PtdIns(3,5)P2). Acts in part as component of the retromer membrane-deforming SNX-BAR subcomplex. The SNX-BAR retromer mediates retrograde transport of cargo proteins from endosomes to the trans-Golgi network (TGN) and is involved in endosome-to-plasma membrane transport for cargo protein recycling. The SNX-BAR subcomplex functions to deform the donor membrane into a tubular profile called endosome-to-TGN transport carrier (ETC). Can sense membrane curvature and has in vitro vesicle-to-membrane remodeling activity. Involved in retrograde endosome-to-TGN transport of lysosomal enzyme receptors (IGF2R, M6PR and SORT1) and Shiginella dysenteria toxin stxB. Plays a role in targeting ligand-activated EGFR to the lysosomes for degradation after endocytosis from the cell surface and release from the Golgi. Involvement in retromer-independent endocytic trafficking of P2RY1 and lysosomal degradation of protease-activated receptor-1/F2R. Promotes KALRN- and RHOG-dependent but retromer-independent membrane remodeling such as lamellipodium formation; the function is dependent on GEF activity of KALRN. Required for endocytosis of DRD5 upon agonist stimulation but not for basal receptor trafficking. The protein is Sorting nexin-1 (SNX1) of Homo sapiens (Human).